A 351-amino-acid polypeptide reads, in one-letter code: Dihydroorotate dehydrogenase (quinone) (351 aa).

Residues 61 to 65 (AGLDK) and threonine 85 each bind FMN. Lysine 65 is a binding site for substrate. Substrate is bound at residue 110–114 (NRMGF). The FMN site is built by asparagine 139 and asparagine 172. Asparagine 172 lines the substrate pocket. The Nucleophile role is filled by serine 175. Substrate is bound at residue asparagine 177. Residues lysine 217 and threonine 245 each contribute to the FMN site. Substrate is bound at residue 246-247 (NT). Residues glycine 268, glycine 297, and 318 to 319 (YS) each bind FMN.

It belongs to the dihydroorotate dehydrogenase family. Type 2 subfamily. As to quaternary structure, monomer. Requires FMN as cofactor.

It is found in the cell membrane. It carries out the reaction (S)-dihydroorotate + a quinone = orotate + a quinol. The protein operates within pyrimidine metabolism; UMP biosynthesis via de novo pathway; orotate from (S)-dihydroorotate (quinone route): step 1/1. Functionally, catalyzes the conversion of dihydroorotate to orotate with quinone as electron acceptor. The chain is Dihydroorotate dehydrogenase (quinone) from Xanthomonas euvesicatoria pv. vesicatoria (strain 85-10) (Xanthomonas campestris pv. vesicatoria).